The sequence spans 629 residues: LEAF RUST 10 DISEASE-RESISTANCE LOCUS RECEPTOR-LIKE PROTEIN KINASE-like 1.1 (629 aa).

The first 19 residues, 1-19 (METVSVLLFFFLFLLAAEA), serve as a signal peptide directing secretion. The Extracellular portion of the chain corresponds to 20-225 (RSTKRTGCKD…PNNYHAEMRL (206 aa)). Residues N56, N92, N123, N124, N172, and N177 are each glycosylated (N-linked (GlcNAc...) asparagine). A helical transmembrane segment spans residues 226–246 (GLGIGGSVILIIILVALFAVI). The Cytoplasmic portion of the chain corresponds to 247–629 (HRNYRRKDGS…TTPNTSAYEF (383 aa)). One can recognise a Protein kinase domain in the interval 291 to 565 (FSKDRLLGDG…TMEQVVHELK (275 aa)). ATP contacts are provided by residues 297 to 305 (LGDGGFGTV) and K319. Y365 is modified (phosphotyrosine). Catalysis depends on D416, which acts as the Proton acceptor. At S449 the chain carries Phosphoserine. Phosphothreonine occurs at positions 450 and 455. Y463 is subject to Phosphotyrosine. The disordered stretch occupies residues 609–629 (VSVTDQWTSKSTTPNTSAYEF).

Belongs to the protein kinase superfamily. Ser/Thr protein kinase family.

It localises to the cell membrane. It catalyses the reaction L-seryl-[protein] + ATP = O-phospho-L-seryl-[protein] + ADP + H(+). The catalysed reaction is L-threonyl-[protein] + ATP = O-phospho-L-threonyl-[protein] + ADP + H(+). This is LEAF RUST 10 DISEASE-RESISTANCE LOCUS RECEPTOR-LIKE PROTEIN KINASE-like 1.1 from Arabidopsis thaliana (Mouse-ear cress).